The sequence spans 194 residues: Orotate phosphoribosyltransferase (194 aa).

116–124 (EDIVTTGLS) is a binding site for 5-phospho-alpha-D-ribose 1-diphosphate. Positions 120 and 148 each coordinate orotate.

Belongs to the purine/pyrimidine phosphoribosyltransferase family. PyrE subfamily. In terms of assembly, homodimer. It depends on Mg(2+) as a cofactor.

The catalysed reaction is orotidine 5'-phosphate + diphosphate = orotate + 5-phospho-alpha-D-ribose 1-diphosphate. It functions in the pathway pyrimidine metabolism; UMP biosynthesis via de novo pathway; UMP from orotate: step 1/2. Functionally, catalyzes the transfer of a ribosyl phosphate group from 5-phosphoribose 1-diphosphate to orotate, leading to the formation of orotidine monophosphate (OMP). The sequence is that of Orotate phosphoribosyltransferase from Caulobacter vibrioides (strain ATCC 19089 / CIP 103742 / CB 15) (Caulobacter crescentus).